Consider the following 204-residue polypeptide: Imidazoleglycerol-phosphate dehydratase (204 aa).

The protein belongs to the imidazoleglycerol-phosphate dehydratase family.

The protein resides in the cytoplasm. It carries out the reaction D-erythro-1-(imidazol-4-yl)glycerol 3-phosphate = 3-(imidazol-4-yl)-2-oxopropyl phosphate + H2O. It participates in amino-acid biosynthesis; L-histidine biosynthesis; L-histidine from 5-phospho-alpha-D-ribose 1-diphosphate: step 6/9. In Rhodococcus erythropolis (strain PR4 / NBRC 100887), this protein is Imidazoleglycerol-phosphate dehydratase.